The primary structure comprises 302 residues: N-acetylmuramic acid 6-phosphate etherase (302 aa).

One can recognise an SIS domain in the interval 58–221 (IGESFLNGGR…STGAMVKTGK (164 aa)). E86 functions as the Proton donor in the catalytic mechanism. The active site involves E117.

This sequence belongs to the GCKR-like family. MurNAc-6-P etherase subfamily. In terms of assembly, homodimer.

It carries out the reaction N-acetyl-D-muramate 6-phosphate + H2O = N-acetyl-D-glucosamine 6-phosphate + (R)-lactate. Its pathway is amino-sugar metabolism; N-acetylmuramate degradation. Its function is as follows. Specifically catalyzes the cleavage of the D-lactyl ether substituent of MurNAc 6-phosphate, producing GlcNAc 6-phosphate and D-lactate. This Clostridium botulinum (strain Okra / Type B1) protein is N-acetylmuramic acid 6-phosphate etherase.